The chain runs to 1172 residues: Laminin subunit beta-3 (1172 aa).

The signal sequence occupies residues 1-17 (MRPFFLLCFALPGLLHA). The Laminin N-terminal domain occupies 22-249 (SRGACYPPVG…AVSQLRLQGS (228 aa)). Asn-220 carries an N-linked (GlcNAc...) asparagine glycan. Disulfide bonds link Cys-250-Cys-259, Cys-252-Cys-279, Cys-281-Cys-290, Cys-293-Cys-313, Cys-316-Cys-325, Cys-318-Cys-343, Cys-346-Cys-355, Cys-358-Cys-376, Cys-379-Cys-392, Cys-381-Cys-399, Cys-401-Cys-410, Cys-413-Cys-428, Cys-431-Cys-444, Cys-433-Cys-451, Cys-453-Cys-462, Cys-465-Cys-478, Cys-481-Cys-493, Cys-483-Cys-500, Cys-502-Cys-511, Cys-519-Cys-531, Cys-534-Cys-546, Cys-536-Cys-553, Cys-555-Cys-564, and Cys-567-Cys-578. Laminin EGF-like domains are found at residues 250 to 315 (CFCH…ECQR), 316 to 378 (CDCN…TCIS), 379 to 430 (CECD…GCHR), 431 to 480 (CDCN…GCEP), 481 to 533 (CACD…GCRA), and 534 to 580 (CDCD…VCVA). The tract at residues 579–785 (VACHPCFQTY…SLPDLTPTFN (207 aa)) is domain II. A glycan (N-linked (GlcNAc...) asparagine) is linked at Asn-604. Residues 723–757 (EQSAQAAQQVSDSSRLLDQLRDSRREAERLVRQAG) adopt a coiled-coil conformation. The domain alpha stretch occupies residues 786–816 (KLCGNSRQMACTPISCPGELCPQDNGTACGS). Asn-810 carries an N-linked (GlcNAc...) asparagine glycan. Residues 817–1170 (RCRGVLPRAG…INGRVLYYAT (354 aa)) form a domain I region. 2 coiled-coil regions span residues 831–884 (MAGQ…MEED) and 948–1133 (VLSQ…ELEL).

In terms of assembly, laminin is a complex glycoprotein, consisting of three different polypeptide chains (alpha, beta, gamma), which are bound to each other by disulfide bonds into a cross-shaped molecule comprising one long and three short arms with globules at each end. Beta-3 is a subunit of laminin-5 (laminin-332 or epiligrin/kalinin/nicein). Interacts with ECM1. Found in the basement membranes (major component).

The protein resides in the secreted. Its subcellular location is the extracellular space. It is found in the extracellular matrix. The protein localises to the basement membrane. Binding to cells via a high affinity receptor, laminin is thought to mediate the attachment, migration and organization of cells into tissues during embryonic development by interacting with other extracellular matrix components. In Homo sapiens (Human), this protein is Laminin subunit beta-3 (LAMB3).